The sequence spans 141 residues: uncharacterized protein (141 aa).

Helical transmembrane passes span 64-84 (IAAVGLAVSGPGVLYKVIEAI) and 112-132 (IVGSGAAFVTALGVAAFLVLI).

It is found in the cell membrane. This is an uncharacterized protein from Sinorhizobium fredii (strain NBRC 101917 / NGR234).